The sequence spans 360 residues: DNA replication and repair protein RecF (360 aa).

33 to 40 (GENGSGKT) serves as a coordination point for ATP.

The protein belongs to the RecF family.

The protein resides in the cytoplasm. In terms of biological role, the RecF protein is involved in DNA metabolism; it is required for DNA replication and normal SOS inducibility. RecF binds preferentially to single-stranded, linear DNA. It also seems to bind ATP. This Rickettsia massiliae (strain Mtu5) protein is DNA replication and repair protein RecF.